A 463-amino-acid polypeptide reads, in one-letter code: MTSETRTLYSQLPAIDRLLHDSAFLSLRDRYGHTQVVDLLRRMLDDARDVIRNTQTLPDWYADWAQEAKLRLENAAQSALRPVINLTGTVLHTNLGRALQAQEAIEAVTQAMRAPVTLEYDLDGAGRGHRDRALATLLCRITGAEDACIVNNNAAAVLLMLAATASGKEVVVSRGELVEIGGAFRIPDVMRQAGCTLHEVGTTNRTHAKDYRQAVNENTGLLMKVHTSNYSIEGFTKTVEEAELAEIGRELDIPVVADLGSGSLVDLSQYGLPKEPMPQQLIAAGVSLVSFSGDKLLGGPQAGIIVGKKAMIAQLQSHPLKRALRADKMTLAALEATLRLYLHPEALAEKLPTLRLLTRSEASIREQAQRLQARLAARYGDEFALEVKPCLSQIGSGSLPVDRLPSAAMTFTPHDGRGSRLEALAARWRMLPVPVIGRIYDGRLWLDMRCLEDESRFMEMMLK.

The residue at position 295 (K295) is an N6-(pyridoxal phosphate)lysine.

The protein belongs to the SelA family. Homodecamer; pentamer of dimers. Binds only one seryl-tRNA(Sec) per dimer. It depends on pyridoxal 5'-phosphate as a cofactor.

Its subcellular location is the cytoplasm. The catalysed reaction is L-seryl-tRNA(Sec) + selenophosphate + H(+) = L-selenocysteinyl-tRNA(Sec) + phosphate. The protein operates within aminoacyl-tRNA biosynthesis; selenocysteinyl-tRNA(Sec) biosynthesis; selenocysteinyl-tRNA(Sec) from L-seryl-tRNA(Sec) (bacterial route): step 1/1. Its function is as follows. Converts seryl-tRNA(Sec) to selenocysteinyl-tRNA(Sec) required for selenoprotein biosynthesis. In Salmonella typhimurium (strain LT2 / SGSC1412 / ATCC 700720), this protein is L-seryl-tRNA(Sec) selenium transferase.